The sequence spans 360 residues: Protein phosphatase 1L (360 aa).

The Extracellular portion of the chain corresponds to 1–25; sequence MIEDTMTLLSLLGRIMRYFLLRPET. A helical membrane pass occupies residues 26–42; it reads LFLLCISLALWSYFFHT. The Cytoplasmic segment spans residues 43–360; it reads DEVKTIVKSS…FRNSSKTEEH (318 aa). The region spanning 92–351 is the PPM-type phosphatase domain; that stretch reads NVAVYSIQGR…DNITVMVVKF (260 aa). Mn(2+) contacts are provided by Asp128, Gly129, Asp302, and Asp342.

It belongs to the PP2C family. As to quaternary structure, interacts with MAP3K7/TAK1 and MAP3K5. Mg(2+) is required as a cofactor. The cofactor is Mn(2+). Expressed in brain, heart, testis, liver, lung and skeletal muscle.

It localises to the membrane. It catalyses the reaction O-phospho-L-seryl-[protein] + H2O = L-seryl-[protein] + phosphate. It carries out the reaction O-phospho-L-threonyl-[protein] + H2O = L-threonyl-[protein] + phosphate. In terms of biological role, acts as a suppressor of the SAPK signaling pathways by associating with and dephosphorylating MAP3K7/TAK1 and MAP3K5, and by attenuating the association between MAP3K7/TAK1 and MAP2K4 or MAP2K6. The protein is Protein phosphatase 1L (Ppm1l) of Mus musculus (Mouse).